The sequence spans 414 residues: Serine/arginine-rich splicing factor SR45 (414 aa).

Disordered stretches follow at residues 1 to 95 (MAKP…KAVQ) and 175 to 414 (LPPR…PRKT). 2 stretches are compositionally biased toward low complexity: residues 10–34 (SPSV…SRSI) and 42–60 (RSLS…GSRS). The Nuclear localization signal 1 motif lies at 62–69 (PRRGKSPA). A Phosphoserine modification is found at serine 77. An RRM domain is found at 98-176 (LVLHVDSLSR…KVVKATFTLP (79 aa)). Positions 176-191 (PPRQKVSSPPKPVSAA) are enriched in low complexity. Residues 205 to 220 (DAEKDGGPRRPRETSP) are compositionally biased toward basic and acidic residues. The required for isoform 1 function in petal development stretch occupies residues 218 to 219 (TS). The segment covering 228-243 (PRRRSPLPRRGLSPRR) has biased composition (basic residues). The short motif at 229-236 (RRRSPLPR) is the Nuclear localization signal 2 element. A Phosphoserine modification is found at serine 256. Short sequence motifs (nuclear localization signal) lie at residues 284-291 (PRRYRSPP), 318-325 (PRRLRSPP), and 338-345 (IRRPGRSR). Basic residues-rich tracts occupy residues 285–343 (RRYR…RPGR) and 352–363 (RKGRGPAGRRGR). Residues 364-373 (SSSYSSSPSP) are compositionally biased toward low complexity. A Nuclear localization signal 6 motif is present at residues 373 to 380 (PRRIPRKI). Positions 375–394 (RIPRKISRSRSPKRPLRGKR) are enriched in basic residues. Residues 404-414 (SPPPPPPPRKT) show a composition bias toward pro residues.

The protein belongs to the splicing factor SR family. SR45 subfamily. In terms of assembly, component of the spliceosome. Interacts with AFC2, U2AF35A, U2AF35B, RNU1, SCL33 and SKIP. The interaction with AFC2 depends on phosphorylation status. Interaction with RNU1 defines initial 5' splice sites and interaction with U2AF35B 3' splice sites in the early stage of spliceosome assembly. Phosphorylated by AFC2. The phosphorylation status regulates intranuclear distribution. Especially present in actively growing regions and dividing cells. Mostly expressed in roots (primary and secondary root meristem), shoot apical meristem (SAM), leaf primordia, pollen and inflorescence, and, to a lower extent, in leaves, vascular tissue, hydathode and fruits.

The protein localises to the nucleus speckle. It is found in the nucleus. Its subcellular location is the nucleoplasm. Involved in 5' and 3' splicing site selection of introns, and may bridge the 5' and 3' components of the spliceosome. Isoform 1 is required during flower petal development and isoform 2 is involved in root growth. Negatively regulates glucose and abscisic acid (ABA) signaling during early seedling development. Involved in the RNA-directed DNA methylation pathway. Modulates KIN10 stability in response to sugars, probably through the splicing regulation of 5PTASE13, a protein implicated in the proteasomal degradation of KIN10. This chain is Serine/arginine-rich splicing factor SR45, found in Arabidopsis thaliana (Mouse-ear cress).